The chain runs to 444 residues: Tubulin beta-7 chain (444 aa).

Residues Q11, E69, S138, G142, T143, G144, N204, and N226 each coordinate GTP. E69 contacts Mg(2+).

The protein belongs to the tubulin family. In terms of assembly, dimer of alpha and beta chains. A typical microtubule is a hollow water-filled tube with an outer diameter of 25 nm and an inner diameter of 15 nM. Alpha-beta heterodimers associate head-to-tail to form protofilaments running lengthwise along the microtubule wall with the beta-tubulin subunit facing the microtubule plus end conferring a structural polarity. Microtubules usually have 13 protofilaments but different protofilament numbers can be found in some organisms and specialized cells. Mg(2+) serves as cofactor. In terms of tissue distribution, expressed in roots, leaf sheaths, and suspension cultured cells.

Its subcellular location is the cytoplasm. The protein localises to the cytoskeleton. Functionally, tubulin is the major constituent of microtubules, a cylinder consisting of laterally associated linear protofilaments composed of alpha- and beta-tubulin heterodimers. Microtubules grow by the addition of GTP-tubulin dimers to the microtubule end, where a stabilizing cap forms. Below the cap, tubulin dimers are in GDP-bound state, owing to GTPase activity of alpha-tubulin. The chain is Tubulin beta-7 chain (TUBB7) from Oryza sativa subsp. japonica (Rice).